The chain runs to 270 residues: Aliphatic sulfonates import ATP-binding protein SsuB 2 (270 aa).

In terms of domain architecture, ABC transporter spans 17–241; it reads LLDLRIARKL…PRDRRDPSLA (225 aa). Position 50 to 57 (50 to 57) interacts with ATP; it reads GPSGCGKS.

Belongs to the ABC transporter superfamily. Aliphatic sulfonates importer (TC 3.A.1.17.2) family. The complex is composed of two ATP-binding proteins (SsuB), two transmembrane proteins (SsuC) and a solute-binding protein (SsuA).

Its subcellular location is the cell inner membrane. The catalysed reaction is ATP + H2O + aliphatic sulfonate-[sulfonate-binding protein]Side 1 = ADP + phosphate + aliphatic sulfonateSide 2 + [sulfonate-binding protein]Side 1.. Functionally, part of the ABC transporter complex SsuABC involved in aliphatic sulfonates import. Responsible for energy coupling to the transport system. In Burkholderia cenocepacia (strain HI2424), this protein is Aliphatic sulfonates import ATP-binding protein SsuB 2.